We begin with the raw amino-acid sequence, 264 residues long: Transcription factor bHLH52 (264 aa).

Positions 134–183 (RELSAQSIAARKRRRRITEKTQELGKLIPGSQKHNTAEMFNAAAKYVKFL) constitute a bHLH domain.

As to quaternary structure, homodimer. Expressed constitutively in roots, leaves, stems, and flowers.

It is found in the nucleus. This Arabidopsis thaliana (Mouse-ear cress) protein is Transcription factor bHLH52 (BHLH52).